The following is a 448-amino-acid chain: Trigger factor (448 aa).

One can recognise a PPIase FKBP-type domain in the interval 167–253; the sequence is GSIVRVDFVE…VKDIKRRDIP (87 aa).

The protein belongs to the FKBP-type PPIase family. Tig subfamily.

It localises to the cytoplasm. It carries out the reaction [protein]-peptidylproline (omega=180) = [protein]-peptidylproline (omega=0). In terms of biological role, involved in protein export. Acts as a chaperone by maintaining the newly synthesized protein in an open conformation. Functions as a peptidyl-prolyl cis-trans isomerase. This Borrelia recurrentis (strain A1) protein is Trigger factor.